The chain runs to 418 residues: Somatostatin receptor type 3 (418 aa).

Positions 1–21 (MDMLHPSSVSTTSEPENASSA) are disordered. Over 1-43 (MDMLHPSSVSTTSEPENASSAWPPDATLGNVSAGPSPAGLAVS) the chain is Extracellular. Residues 7–20 (SSVSTTSEPENASS) show a composition bias toward polar residues. Residues N17 and N30 are each glycosylated (N-linked (GlcNAc...) asparagine). A helical transmembrane segment spans residues 44–69 (GVLIPLVYLVVCVVGLLGNSLVIYVV). The Cytoplasmic segment spans residues 70-79 (LRHTASPSVT). A helical transmembrane segment spans residues 80 to 101 (NVYILNLALADELFMLGLPFLA). Topologically, residues 102-116 (AQNALSYWPFGSLMC) are extracellular. An intrachain disulfide couples C116 to C191. The helical transmembrane segment at 117–138 (RLVMAVDGINQFTSIFCLTVMS) threads the bilayer. The Cytoplasmic portion of the chain corresponds to 139–161 (VDRYLAVVHPTRSARWRTAPVAR). A helical membrane pass occupies residues 162–181 (TVSAAVWVASAVVVLPVVVF). Residues 182 to 205 (SGVPRGMSTCHMQWPEPAAAWRAG) lie on the Extracellular side of the membrane. Residues 206-231 (FIIYTAALGFFGPLLVICLCYLLIVV) form a helical membrane-spanning segment. The Cytoplasmic segment spans residues 232-257 (KVRSAGRRVWAPSCQRRRRSERRVTR). The helical transmembrane segment at 258 to 279 (MVVAVVALFVLCWMPFYVLNIV) threads the bilayer. Residues 280-293 (NVVCPLPEEPAFFG) lie on the Extracellular side of the membrane. The chain crosses the membrane as a helical span at residues 294-316 (LYFLVVALPYANSCANPILYGFL). Topologically, residues 317 to 418 (SYRFKQGFRR…KSSTMRISYL (102 aa)) are cytoplasmic. Residues S332 and S337 each carry the phosphoserine modification. Positions 335–418 (VRSQEPTVGP…KSSTMRISYL (84 aa)) are disordered. A Phosphothreonine modification is found at T348. Positions 348–360 (TEEEDEEEEDGEE) are enriched in acidic residues. A compositionally biased stretch (basic and acidic residues) spans 361–371 (SREGGKGKEMN). Polar residues-rich tracts occupy residues 373 to 385 (RVSQITQPGTSGQ) and 395 to 418 (KEQQLLPQEASTGEKSSTMRISYL).

Belongs to the G-protein coupled receptor 1 family. In terms of assembly, homodimer and heterodimer with SSTR2. Heterodimerization with SSTR2 inactivates SSTR3 receptor function. Post-translationally, phosphorylated. Phosphorylation increases upon somatostatin binding. Brain, pituitary and pancreas.

Its subcellular location is the cell membrane. Functionally, receptor for somatostatin-14 and -28. This receptor is coupled via pertussis toxin sensitive G proteins to inhibition of adenylyl cyclase. The sequence is that of Somatostatin receptor type 3 (SSTR3) from Homo sapiens (Human).